Consider the following 241-residue polypeptide: Ashwin (241 aa).

Disordered regions lie at residues 1-21 (MAAQ…SARS), 82-102 (KMME…SVTA), and 212-241 (KRSV…CTWP). The segment covering 11–21 (GGKEERVSARS) has biased composition (basic and acidic residues).

It belongs to the ashwin family.

The protein localises to the nucleus. This Gallus gallus (Chicken) protein is Ashwin.